A 416-amino-acid polypeptide reads, in one-letter code: Enolase (416 aa).

Gln160 serves as a coordination point for (2R)-2-phosphoglycerate. The active-site Proton donor is the Glu204. Positions 239, 280, and 306 each coordinate Mg(2+). (2R)-2-phosphoglycerate is bound by residues Lys331, Arg360, Ser361, and Lys382. Lys331 functions as the Proton acceptor in the catalytic mechanism.

It belongs to the enolase family. It depends on Mg(2+) as a cofactor.

The protein resides in the cytoplasm. It localises to the secreted. Its subcellular location is the cell surface. The enzyme catalyses (2R)-2-phosphoglycerate = phosphoenolpyruvate + H2O. The protein operates within carbohydrate degradation; glycolysis; pyruvate from D-glyceraldehyde 3-phosphate: step 4/5. In terms of biological role, catalyzes the reversible conversion of 2-phosphoglycerate (2-PG) into phosphoenolpyruvate (PEP). It is essential for the degradation of carbohydrates via glycolysis. In Sulfolobus acidocaldarius (strain ATCC 33909 / DSM 639 / JCM 8929 / NBRC 15157 / NCIMB 11770), this protein is Enolase.